A 212-amino-acid polypeptide reads, in one-letter code: Ribonuclease HII (212 aa).

The region spanning 28–212 (SIIAGVDEVG…KSFAPIRQVV (185 aa)) is the RNase H type-2 domain. Residues aspartate 34, glutamate 35, and aspartate 127 each coordinate a divalent metal cation.

This sequence belongs to the RNase HII family. Mn(2+) serves as cofactor. It depends on Mg(2+) as a cofactor.

The protein resides in the cytoplasm. The catalysed reaction is Endonucleolytic cleavage to 5'-phosphomonoester.. Its function is as follows. Endonuclease that specifically degrades the RNA of RNA-DNA hybrids. The chain is Ribonuclease HII from Chlamydia caviae (strain ATCC VR-813 / DSM 19441 / 03DC25 / GPIC) (Chlamydophila caviae).